The chain runs to 89 residues: Small ribosomal subunit protein uS15 (89 aa).

This sequence belongs to the universal ribosomal protein uS15 family. In terms of assembly, part of the 30S ribosomal subunit. Forms a bridge to the 50S subunit in the 70S ribosome, contacting the 23S rRNA.

In terms of biological role, one of the primary rRNA binding proteins, it binds directly to 16S rRNA where it helps nucleate assembly of the platform of the 30S subunit by binding and bridging several RNA helices of the 16S rRNA. Forms an intersubunit bridge (bridge B4) with the 23S rRNA of the 50S subunit in the ribosome. The sequence is that of Small ribosomal subunit protein uS15 from Prochlorococcus marinus (strain MIT 9215).